The chain runs to 265 residues: Anaphase-promoting complex subunit 9 (265 aa).

As to quaternary structure, the APC/C is composed of at least 13 subunits that stay tightly associated throughout the cell cycle: APC1, APC2, APC4, APC5, APC9, APC11, CDC16, CDC23, CDC26, CDC27, DOC1, MND2 and SWM1.

It is found in the cytoplasm. The protein localises to the nucleus. The protein operates within protein modification; protein ubiquitination. In terms of biological role, component of the anaphase promoting complex/cyclosome (APC/C), a cell cycle-regulated E3 ubiquitin-protein ligase complex that controls progression through mitosis and the G1 phase of the cell cycle. The APC/C is thought to confer substrate specificity and, in the presence of ubiquitin-conjugating E2 enzymes, it catalyzes the formation of protein-ubiquitin conjugates that are subsequently degraded by the 26S proteasome. In early mitosis, the APC/C is activated by CDC20 and targets securin PDS1, the B-type cyclin CLB5, and other anaphase inhibitory proteins for proteolysis, thereby triggering the separation of sister chromatids at the metaphase-to-anaphase transition. In late mitosis and in G1, degradation of CLB5 allows activation of the APC/C by CDH1, which is needed to destroy CDC20 and the B-type cyclin CLB2 to allow exit from mitosis and creating the low CDK state necessary for cytokinesis and for reforming prereplicative complexes in G1 prior to another round of replication. This chain is Anaphase-promoting complex subunit 9 (APC9), found in Saccharomyces cerevisiae (strain ATCC 204508 / S288c) (Baker's yeast).